We begin with the raw amino-acid sequence, 376 residues long: 3-dehydroquinate synthase (376 aa).

NAD(+) contacts are provided by residues 115–119 (GVIGD), 139–140 (TS), Lys152, and Lys161. Glu194, His256, and His275 together coordinate Zn(2+).

Belongs to the sugar phosphate cyclases superfamily. Dehydroquinate synthase family. It depends on Co(2+) as a cofactor. Requires Zn(2+) as cofactor. NAD(+) serves as cofactor.

Its subcellular location is the cytoplasm. It catalyses the reaction 7-phospho-2-dehydro-3-deoxy-D-arabino-heptonate = 3-dehydroquinate + phosphate. Its pathway is metabolic intermediate biosynthesis; chorismate biosynthesis; chorismate from D-erythrose 4-phosphate and phosphoenolpyruvate: step 2/7. Its function is as follows. Catalyzes the conversion of 3-deoxy-D-arabino-heptulosonate 7-phosphate (DAHP) to dehydroquinate (DHQ). In Rhizobium etli (strain CIAT 652), this protein is 3-dehydroquinate synthase.